Reading from the N-terminus, the 397-residue chain is Phosphoglycerate kinase (397 aa).

Substrate contacts are provided by residues 21-23 (DFN), R37, 60-63 (HLGR), R119, and R152. Residues K203, G294, E325, and 354–357 (GGDS) contribute to the ATP site.

Belongs to the phosphoglycerate kinase family. Monomer.

Its subcellular location is the cytoplasm. It catalyses the reaction (2R)-3-phosphoglycerate + ATP = (2R)-3-phospho-glyceroyl phosphate + ADP. Its pathway is carbohydrate degradation; glycolysis; pyruvate from D-glyceraldehyde 3-phosphate: step 2/5. The polypeptide is Phosphoglycerate kinase (Chlorobium phaeovibrioides (strain DSM 265 / 1930) (Prosthecochloris vibrioformis (strain DSM 265))).